Consider the following 353-residue polypeptide: Peptide-N(4)-(N-acetyl-beta-glucosaminyl)asparagine amidase (353 aa).

Zn(2+)-binding residues include C125, C128, and C159. Residue C185 is the Nucleophile of the active site. Active-site residues include H212 and D229. E232 contacts substrate. Residues 316 to 353 (SLEKTKPSKDTSTTTLTGTKGRESGSTAWKQQRGEDGS) form a disordered region. Positions 325–334 (DTSTTTLTGT) are enriched in low complexity.

It belongs to the transglutaminase-like superfamily. PNGase family. Requires Zn(2+) as cofactor.

The protein localises to the cytoplasm. It carries out the reaction Hydrolysis of an N(4)-(acetyl-beta-D-glucosaminyl)asparagine residue in which the glucosamine residue may be further glycosylated, to yield a (substituted) N-acetyl-beta-D-glucosaminylamine and a peptide containing an aspartate residue.. Specifically deglycosylates the denatured form of N-linked glycoproteins in the cytoplasm and assists their proteasome-mediated degradation. Cleaves the beta-aspartyl-glucosamine (GlcNAc) of the glycan and the amide side chain of Asn, converting Asn to Asp. Prefers proteins containing high-mannose over those bearing complex type oligosaccharides. Can recognize misfolded proteins in the endoplasmic reticulum that are exported to the cytosol to be destroyed and deglycosylate them, while it has no activity toward native proteins. Deglycosylation is a prerequisite for subsequent proteasome-mediated degradation of some, but not all, misfolded glycoproteins. This is Peptide-N(4)-(N-acetyl-beta-glucosaminyl)asparagine amidase (PNG1) from Kluyveromyces lactis (strain ATCC 8585 / CBS 2359 / DSM 70799 / NBRC 1267 / NRRL Y-1140 / WM37) (Yeast).